We begin with the raw amino-acid sequence, 161 residues long: Nucleotide-binding protein Bxeno_A3642 (161 aa).

This sequence belongs to the YajQ family.

In terms of biological role, nucleotide-binding protein. The polypeptide is Nucleotide-binding protein Bxeno_A3642 (Paraburkholderia xenovorans (strain LB400)).